The chain runs to 517 residues: Probable G-protein coupled receptor Mth-like 4 (517 aa).

The first 18 residues, 1–18 (MRILLIAVLFLLMPKSNA), serve as a signal peptide directing secretion. Residues 19–212 (EIPGCDFFDT…LSSEHSRTWK (194 aa)) are Extracellular-facing. 5 cysteine pairs are disulfide-bonded: Cys-23–Cys-77, Cys-79–Cys-84, Cys-88–Cys-183, Cys-89–Cys-100, and Cys-145–Cys-201. Asn-39 carries an N-linked (GlcNAc...) asparagine glycan. Residues Asn-117 and Asn-165 are each glycosylated (N-linked (GlcNAc...) asparagine). Residues 213 to 233 (TVAIVISLICIILTISVYLYV) traverse the membrane as a helical segment. At 234 to 242 (EKLRNLHGK) the chain is on the cytoplasmic side. Residues 243–263 (CFICYLASLFLGYFFLVLNVW) form a helical membrane-spanning segment. At 264–272 (KYSSGFCVT) the chain is on the extracellular side. A helical transmembrane segment spans residues 273–293 (AGFLGYFSVMAAFFWLSVIGI). The Cytoplasmic portion of the chain corresponds to 294 to 319 (HLRIKFSLASNCLHRLLPENPFRAYN). Residues 320-340 (LYAWGIPLIMTAITYTADQVV) form a helical membrane-spanning segment. Over 341-363 (KNEKLRPRVGVGKNCWIYTGDMT) the chain is Extracellular. The chain crosses the membrane as a helical span at residues 364–384 (VMIYFYGPMLLLIAFNIIMFV). Over 385–414 (LSAIYIYNIKKNVKGLVHKQQTNQQINDQQ) the chain is Cytoplasmic. The chain crosses the membrane as a helical span at residues 415–435 (MFAIFLRLFILMGLSWSFEIL). Over 436–459 (SFLLTKQQAWARALMVADYFNWSQ) the chain is Extracellular. The N-linked (GlcNAc...) asparagine glycan is linked to Asn-456. The chain crosses the membrane as a helical span at residues 460-480 (GTIIFVLFILKPSILKLIIAG). At 481–517 (GRQNLPGSHHNSRSKAARYNSTHTACEGSIADPNAYC) the chain is on the cytoplasmic side.

It belongs to the G-protein coupled receptor 2 family. Mth subfamily.

It localises to the cell membrane. The protein is Probable G-protein coupled receptor Mth-like 4 (mthl4) of Drosophila melanogaster (Fruit fly).